A 101-amino-acid chain; its full sequence is Ribonuclease kappa-B (101 aa).

2 helical membrane-spanning segments follow: residues 13–33 (ACGIVLSVWGVIMLVLLGVFF) and 68–88 (VSYNCFIAAAIYIVLGGFSFC).

This sequence belongs to the RNase K family.

The protein localises to the membrane. Its function is as follows. Endoribonuclease which preferentially cleaves ApU and ApG phosphodiester bonds. This Xenopus laevis (African clawed frog) protein is Ribonuclease kappa-B (rnasek-b).